Here is a 466-residue protein sequence, read N- to C-terminus: ATP synthase subunit beta (466 aa).

152-159 lines the ATP pocket; the sequence is GGAGVGKT.

This sequence belongs to the ATPase alpha/beta chains family. In terms of assembly, F-type ATPases have 2 components, CF(1) - the catalytic core - and CF(0) - the membrane proton channel. CF(1) has five subunits: alpha(3), beta(3), gamma(1), delta(1), epsilon(1). CF(0) has three main subunits: a(1), b(2) and c(9-12). The alpha and beta chains form an alternating ring which encloses part of the gamma chain. CF(1) is attached to CF(0) by a central stalk formed by the gamma and epsilon chains, while a peripheral stalk is formed by the delta and b chains.

The protein localises to the cell inner membrane. The catalysed reaction is ATP + H2O + 4 H(+)(in) = ADP + phosphate + 5 H(+)(out). Functionally, produces ATP from ADP in the presence of a proton gradient across the membrane. The catalytic sites are hosted primarily by the beta subunits. The sequence is that of ATP synthase subunit beta from Sulfurovum sp. (strain NBC37-1).